The sequence spans 521 residues: Cytochrome P450 monooxygenase bet2 (521 aa).

The helical transmembrane segment at 23–43 (SNWRFALFVAATLLTSYIVIV) threads the bilayer. Residue Asn-188 is glycosylated (N-linked (GlcNAc...) asparagine). Cys-461 is a heme binding site.

The protein belongs to the cytochrome P450 family. The cofactor is heme.

The protein localises to the membrane. It catalyses the reaction dehydroprobetaenone I + NADPH + O2 + H(+) = epoxybetaenone + NADP(+) + H2O. It carries out the reaction dehydroprobetaenone I + 3 NADPH + 3 O2 + 3 H(+) = betaenone C + 3 NADP(+) + 3 H2O. It participates in mycotoxin biosynthesis. Its function is as follows. Cytochrome P450 monooxygenase; part of the gene cluster that mediates the biosynthesis of betaenones, phytotoxic polyketides involved in leaf spot disease in sugar beets. The first step of the pathway is the synthesis of dehydroprobetaenone I by the polyketide synthase bet1 and the enoyl reductase bet3 via condensation of one acetyl-CoA starter unit with 7 malonyl-CoA units and 5 methylations. The C-terminal reductase (R) domain of bet1 catalyzes the reductive release of the polyketide chain. Because bet1 lacks a designated enoylreductase (ER) domain, the required activity is provided the enoyl reductase bet3. The short-chain dehydrogenase/reductase bet4 then catalyzes reduction of dehydroprobetaenone I to probetaenone I. The cytochrome P450 monooxygenase bet2 catalyzes successive epoxidation, oxidation (resulting from epoxide opening) and hydroxylation to install a tertiary alcohol in the decaline ring to yield betaenone C from dehydroprobetaenone I and betaenone B from probetaenone I. The FAD-linked oxidoreductase (orf1) is probably responsible for the conversion of betaenone C to betaenone A via an intramolecular aldol reaction between C-1 and C-17 to form the bridged tricyclic system in betaenone A. This Neocamarosporium betae (Beet black rot fungus) protein is Cytochrome P450 monooxygenase bet2.